The primary structure comprises 221 residues: DELTA-actitoxin-Ucs1a (221 aa).

The signal sequence occupies residues 1–19 (MNRLIVLCLFVAMIYATIA). The propeptide occupies 20–42 (LPKKEDISNDERSISVSKVPVKK). Residues 45 to 54 (AIAGAVIEGA) are plays an important role in the hemolytic activity. The segment at 53–72 (GAKLTFGILEKILTVLGDIN) is N-terminal region. Phosphocholine contacts are provided by Ser96, Val129, Ser147, Pro149, Tyr175, Tyr179, and Tyr180. A trp-rich region, which is important for the binding to lipid membrane region spans residues 147–162 (SVPYDYNLYSNWWNIK). The short motif at 186-188 (KGD) is the Cell attachment site, crucial for protein stability element.

This sequence belongs to the actinoporin family. Sea anemone subfamily. As to quaternary structure, octamer or nonamer in membranes. Monomer in the soluble state.

The protein resides in the secreted. It localises to the nematocyst. Its subcellular location is the target cell membrane. Pore-forming protein that forms cations-selective hydrophilic pores of around 1 nm and causes cytolysis. Pore formation is a multi-step process that involves specific recognition of membrane sphingomyelin (but neither cholesterol nor phosphatidylcholine) using aromatic rich region and adjacent phosphocholine (POC) binding site, firm binding to the membrane (mainly driven by hydrophobic interactions) accompanied by the transfer of the N-terminal region to the lipid-water interface and finally pore formation after oligomerization of monomers. The chain is DELTA-actitoxin-Ucs1a from Urticina crassicornis (Mottled anemone).